We begin with the raw amino-acid sequence, 148 residues long: Calmodulin (148 aa).

N-acetylalanine is present on alanine 2. 4 EF-hand domains span residues 8-43, 44-79, 81-116, and 116-148; these read DQIS…LGQN, PTEA…KMKD, DSEE…LGEK, and KLTD…MMAK. The Ca(2+) site is built by aspartate 21, aspartate 23, aspartate 25, cysteine 27, glutamate 32, aspartate 57, aspartate 59, asparagine 61, threonine 63, glutamate 68, aspartate 94, aspartate 96, asparagine 98, and glutamate 105. The residue at position 116 (lysine 116) is an N6,N6,N6-trimethyllysine. Residues aspartate 129, aspartate 131, aspartate 133, glutamine 135, and glutamate 140 each coordinate Ca(2+).

It belongs to the calmodulin family.

Functionally, calmodulin mediates the control of a large number of enzymes, ion channels and other proteins by Ca(2+). Among the enzymes to be stimulated by the calmodulin-Ca(2+) complex are a number of protein kinases and phosphatases. The chain is Calmodulin (CAMF1) from Fagus sylvatica (Beechnut).